Reading from the N-terminus, the 280-residue chain is Small ribosomal subunit protein uS3 (280 aa).

Residues 38 to 106 (IRKLLATGLE…QVQLNILEVK (69 aa)) enclose the KH type-2 domain. The segment at 216–280 (AAAPAADRPR…SAGQPETTES (65 aa)) is disordered. Residues 237–270 (SGASGTTATSTDAGRAASEGTVEAPATEAAATAP) show a composition bias toward low complexity.

The protein belongs to the universal ribosomal protein uS3 family. In terms of assembly, part of the 30S ribosomal subunit. Forms a tight complex with proteins S10 and S14.

Its function is as follows. Binds the lower part of the 30S subunit head. Binds mRNA in the 70S ribosome, positioning it for translation. This is Small ribosomal subunit protein uS3 from Mycolicibacterium vanbaalenii (strain DSM 7251 / JCM 13017 / BCRC 16820 / KCTC 9966 / NRRL B-24157 / PYR-1) (Mycobacterium vanbaalenii).